The chain runs to 318 residues: Myoblast determination protein 1 (318 aa).

Met1 is covalently cross-linked (Peptide (Met-Gly) (interchain with G-Cter in ubiquitin)). Lys104 carries the post-translational modification N6-methyllysine; by EHMT2. Residues 109–160 form the bHLH domain; sequence DRRKAATMRERRRLSKVNEAFETLKRCTSSNPNQRLPKVEILRNAIRYIEGL. Disordered regions lie at residues 174–224 and 266–318; these read AAAA…RRRN and APAL…YQVL. A compositionally biased stretch (polar residues) spans 197–207; it reads SDASSPRSNCS. Residues 266–276 are compositionally biased toward low complexity; it reads APALLLADAPP.

Efficient DNA binding requires dimerization with another bHLH protein. Seems to form active heterodimers with ITF-2. Interacts with SUV39H1. Interacts with DDX5. Interacts with CHD2. Interacts with TSC22D3. Interacts with SETD3. Interacts with P-TEFB complex; promotes the transcriptional activity of MYOD1 through its CDK9-mediated phosphorylation. Interacts with CSRP3. Interacts with NUPR1. In terms of processing, phosphorylated by CDK9. This phosphorylation promotes its function in muscle differentiation. Acetylated by a complex containing EP300 and PCAF. The acetylation is essential to activate target genes. Conversely, its deacetylation by SIRT1 inhibits its function. Post-translationally, ubiquitinated on the N-terminus; which is required for proteasomal degradation. In terms of processing, methylation at Lys-104 by EHMT2/G9a inhibits myogenic activity.

The protein resides in the nucleus. Acts as a transcriptional activator that promotes transcription of muscle-specific target genes and plays a role in muscle differentiation. Together with MYF5 and MYOG, co-occupies muscle-specific gene promoter core region during myogenesis. Induces fibroblasts to differentiate into myoblasts. Interacts with and is inhibited by the twist protein. This interaction probably involves the basic domains of both proteins. The sequence is that of Myoblast determination protein 1 (MYOD1) from Bos taurus (Bovine).